Reading from the N-terminus, the 101-residue chain is Urease subunit beta (101 aa).

This sequence belongs to the urease beta subunit family. Heterotrimer of UreA (gamma), UreB (beta) and UreC (alpha) subunits. Three heterotrimers associate to form the active enzyme.

Its subcellular location is the cytoplasm. The enzyme catalyses urea + 2 H2O + H(+) = hydrogencarbonate + 2 NH4(+). Its pathway is nitrogen metabolism; urea degradation; CO(2) and NH(3) from urea (urease route): step 1/1. The protein is Urease subunit beta of Burkholderia cenocepacia (strain ATCC BAA-245 / DSM 16553 / LMG 16656 / NCTC 13227 / J2315 / CF5610) (Burkholderia cepacia (strain J2315)).